Here is a 62-residue protein sequence, read N- to C-terminus: DNA gyrase inhibitor YacG (62 aa).

Residues C9, C12, C27, and C31 each contribute to the Zn(2+) site. Over residues 43–53 the composition is skewed to basic and acidic residues; the sequence is GYRIPGEKAPE. Residues 43 to 62 form a disordered region; that stretch reads GYRIPGEKAPESGDEEPGDE.

Belongs to the DNA gyrase inhibitor YacG family. Interacts with GyrB. Requires Zn(2+) as cofactor.

Inhibits all the catalytic activities of DNA gyrase by preventing its interaction with DNA. Acts by binding directly to the C-terminal domain of GyrB, which probably disrupts DNA binding by the gyrase. The protein is DNA gyrase inhibitor YacG of Citrifermentans bemidjiense (strain ATCC BAA-1014 / DSM 16622 / JCM 12645 / Bem) (Geobacter bemidjiensis).